The sequence spans 423 residues: Cytidylate cyclase (423 aa).

The 106-residue stretch at 79–184 folds into the Guanylate cyclase domain; sequence CSLFVDISGS…LKIRIGIDFG (106 aa). Residue F82 coordinates a ribonucleoside 5'-triphosphate. Positions 84, 85, and 128 each coordinate Mn(2+). Residues 290 to 409 form an AGS-C domain region; that stretch reads ENEQFYSPRD…ICHDSFGLFI (120 aa).

This sequence belongs to the adenylyl cyclase class-4/guanylyl cyclase family. Pyrimidine cyclase subfamily. In terms of assembly, homodimer. Mn(2+) is required as a cofactor.

Its subcellular location is the cytoplasm. The catalysed reaction is CTP = 3',5'-cyclic CMP + diphosphate. In terms of biological role, pycsar (pyrimidine cyclase system for antiphage resistance) provides immunity against bacteriophage. The pyrimidine cyclase (PycC) synthesizes cyclic nucleotides in response to infection; these serve as specific second messenger signals. The signal activates the adjacent effector, leading to bacterial cell death and abortive phage infection. A clade E Pycsar system. The pyrimidine cyclase gene of a two-gene Pycsar system, weakly generates cyclic CMP (cCMP) from CTP, has little to no activity on ATP, GTP or UTP. Expression of this and adjacent effector SaPycTM (AC P0DV39) probably confers resistance to bacteriophage. The genes are probably only expressed in response to bacteriophage infection. The polypeptide is Cytidylate cyclase (Staphylococcus aureus).